The primary structure comprises 107 residues: Probable monothiol glutaredoxin 2 (107 aa).

One can recognise a Glutaredoxin domain in the interval 7–107 (FKFIENEIKN…LEKMLKAYTR (101 aa)). Lys24 serves as a coordination point for glutathione. A [2Fe-2S] cluster-binding site is contributed by Cys32. Residues Arg61, Phe73, and 86–87 (CD) each bind glutathione.

It belongs to the glutaredoxin family. Monothiol subfamily.

In Rickettsia conorii (strain ATCC VR-613 / Malish 7), this protein is Probable monothiol glutaredoxin 2 (grxC2).